The chain runs to 199 residues: MLDREGYRPNVGIVLLNSRNEVFWGKRVGQHSWQFPQGGIQHGESPEQAMYRELHEEVGLLPEHVQIIGRTRDWLRYDVPEEYLRRQHATRVHRAAYRGQKQIWFLLRLVGLDSDIQLRASEHPEFDAWRWVPFWIQLDAVIGFKREVYELALSELARYLSRGVRMHQLAWGSPLDLLQSFYSKGEEGSPESSKTDKSK.

The Nudix hydrolase domain maps to 6–154 (GYRPNVGIVL…KREVYELALS (149 aa)). A Nudix box motif is present at residues 38–59 (GGIQHGESPEQAMYRELHEEVG).

It belongs to the Nudix hydrolase family. RppH subfamily. A divalent metal cation is required as a cofactor.

Its function is as follows. Accelerates the degradation of transcripts by removing pyrophosphate from the 5'-end of triphosphorylated RNA, leading to a more labile monophosphorylated state that can stimulate subsequent ribonuclease cleavage. The protein is RNA pyrophosphohydrolase of Polynucleobacter asymbioticus (strain DSM 18221 / CIP 109841 / QLW-P1DMWA-1) (Polynucleobacter necessarius subsp. asymbioticus).